Here is a 548-residue protein sequence, read N- to C-terminus: Chaperonin GroEL (548 aa).

Residues 30-33 (TLGP), K51, 87-91 (DGTTT), G415, 479-481 (NAA), and D495 contribute to the ATP site.

It belongs to the chaperonin (HSP60) family. As to quaternary structure, forms a cylinder of 14 subunits composed of two heptameric rings stacked back-to-back. Interacts with the co-chaperonin GroES.

Its subcellular location is the cytoplasm. The catalysed reaction is ATP + H2O + a folded polypeptide = ADP + phosphate + an unfolded polypeptide.. In terms of biological role, together with its co-chaperonin GroES, plays an essential role in assisting protein folding. The GroEL-GroES system forms a nano-cage that allows encapsulation of the non-native substrate proteins and provides a physical environment optimized to promote and accelerate protein folding. The protein is Chaperonin GroEL of Sodalis glossinidius (strain morsitans).